We begin with the raw amino-acid sequence, 366 residues long: Peptide chain release factor 2 (366 aa).

Gln253 is subject to N5-methylglutamine.

The protein belongs to the prokaryotic/mitochondrial release factor family. Methylated by PrmC. Methylation increases the termination efficiency of RF2.

It is found in the cytoplasm. Peptide chain release factor 2 directs the termination of translation in response to the peptide chain termination codons UGA and UAA. This chain is Peptide chain release factor 2, found in Yersinia pseudotuberculosis serotype I (strain IP32953).